A 494-amino-acid polypeptide reads, in one-letter code: Glutamyl-tRNA(Gln) amidotransferase subunit A, mitochondrial (494 aa).

Residues K79 and S160 each act as charge relay system in the active site. Catalysis depends on S184, which acts as the Acyl-ester intermediate.

It belongs to the amidase family. GatA subfamily. As to quaternary structure, subunit of the heterotrimeric GatCAB amidotransferase (AdT) complex, composed of A, B and C subunits.

Its subcellular location is the mitochondrion. It catalyses the reaction L-glutamyl-tRNA(Gln) + L-glutamine + ATP + H2O = L-glutaminyl-tRNA(Gln) + L-glutamate + ADP + phosphate + H(+). Functionally, allows the formation of correctly charged Gln-tRNA(Gln) through the transamidation of misacylated Glu-tRNA(Gln) in the mitochondria. The reaction takes place in the presence of glutamine and ATP through an activated gamma-phospho-Glu-tRNA(Gln). The chain is Glutamyl-tRNA(Gln) amidotransferase subunit A, mitochondrial from Aedes aegypti (Yellowfever mosquito).